A 138-amino-acid chain; its full sequence is Acidic phospholipase A2 VpaPLA2 (138 aa).

The first 16 residues, Met1–Gly16, serve as a signal peptide directing secretion. 7 disulfides stabilise this stretch: Cys42–Cys131, Cys44–Cys60, Cys59–Cys111, Cys65–Cys138, Cys66–Cys104, Cys73–Cys97, and Cys91–Cys102. Ca(2+)-binding residues include Tyr43, Gly45, and Gly47. His63 is a catalytic residue. Asp64 serves as a coordination point for Ca(2+). Residue Asp105 is part of the active site.

It belongs to the phospholipase A2 family. Group II subfamily. D49 sub-subfamily. Ca(2+) is required as a cofactor. Expressed by the venom gland.

The protein resides in the secreted. The catalysed reaction is a 1,2-diacyl-sn-glycero-3-phosphocholine + H2O = a 1-acyl-sn-glycero-3-phosphocholine + a fatty acid + H(+). Its function is as follows. Snake venom phospholipase A2 (PLA2) that causes a sudden decrease of arterial blood pressure when injected into rat, but is not lethal. When co-injected with an uncharacterized basic protein (which did not show any enzymatic activity, but also causes a drop in blood pressure), this synergistical mixture is lethal. PLA2 catalyzes the calcium-dependent hydrolysis of the 2-acyl groups in 3-sn-phosphoglycerides. The chain is Acidic phospholipase A2 VpaPLA2 from Daboia palaestinae (Palestine viper).